A 702-amino-acid chain; its full sequence is Polyribonucleotide nucleotidyltransferase (702 aa).

2 residues coordinate Mg(2+): Asp-491 and Asp-497. A KH domain is found at 558 to 618 (PKMKTFMIPV…TAIEKAYQLI (61 aa)). The S1 motif domain occupies 628–696 (GEKIIGPVVK…GKGKIKLQLI (69 aa)).

It belongs to the polyribonucleotide nucleotidyltransferase family. Mg(2+) is required as a cofactor.

Its subcellular location is the cytoplasm. It catalyses the reaction RNA(n+1) + phosphate = RNA(n) + a ribonucleoside 5'-diphosphate. Functionally, involved in mRNA degradation. Catalyzes the phosphorolysis of single-stranded polyribonucleotides processively in the 3'- to 5'-direction. In Spiroplasma citri, this protein is Polyribonucleotide nucleotidyltransferase.